Consider the following 229-residue polypeptide: MRLNVAVFFGALFGALGVLLFLVAFGSDYWLLATEVGRCSGEQNIENITFHHEGFFWRCWFSGVVEENNSNIWKFWYTNQPPSKNCTHAYLSPYPFMRGEHNSTSYDSAIIYRGFWAVLLLLGVVAALTASFLIICAAPFSSHFLYKAGGGSYIASGVLFSLVVILYVIWVQAVADMESYRALRMRDCWEFTPSILYGWSFFLAPAGVFFSLLAGLLFLVVGRHIQIHH.

An N-terminal signal peptide occupies residues 1–26 (MRLNVAVFFGALFGALGVLLFLVAFG). Residues 27 to 114 (SDYWLLATEV…SYDSAIIYRG (88 aa)) are Extracellular-facing. Asparagine 47 carries an N-linked (GlcNAc...) asparagine glycan. Positions 49 to 59 (TFHHEGFFWRC) are interaction with ITGB1. Residues asparagine 68, asparagine 85, and asparagine 102 are each glycosylated (N-linked (GlcNAc...) asparagine). A helical membrane pass occupies residues 115–135 (FWAVLLLLGVVAALTASFLII). Residues 136–153 (CAAPFSSHFLYKAGGGSY) lie on the Cytoplasmic side of the membrane. The helical transmembrane segment at 154-174 (IASGVLFSLVVILYVIWVQAV) threads the bilayer. Residues 175–200 (ADMESYRALRMRDCWEFTPSILYGWS) lie on the Extracellular side of the membrane. The helical transmembrane segment at 201 to 221 (FFLAPAGVFFSLLAGLLFLVV) threads the bilayer. Residues 222–229 (GRHIQIHH) are Cytoplasmic-facing.

This sequence belongs to the TMEM182 family. In terms of assembly, interacts with ITGB1. In terms of tissue distribution, highly expressed in white adipose tissues (WAT), with 10-fold to 20-fold higher levels than in brown adipose tissue (BAT). Also expressed in skeletal muscle, heart and lung. Lower relative levels of expression in kidney, spleen, testis, brain and liver.

The protein resides in the cell membrane. Negatively regulates myogenesis and skeletal muscle regeneration via its association with ITGB1. Modulates ITGB1 activation by decreasing ITGB1-LAMB1 interaction and inhibiting ITGB1-mediated intracellular signaling during myogenesis. This is Transmembrane protein 182 (Tmem182) from Mus musculus (Mouse).